Consider the following 418-residue polypeptide: UDP-N-acetylglucosamine 1-carboxyvinyltransferase (418 aa).

23–24 (KN) is a binding site for phosphoenolpyruvate. Position 93 (Arg-93) interacts with UDP-N-acetyl-alpha-D-glucosamine. Catalysis depends on Asp-117, which acts as the Proton donor. Positions 305 and 327 each coordinate UDP-N-acetyl-alpha-D-glucosamine.

The protein belongs to the EPSP synthase family. MurA subfamily.

The protein localises to the cytoplasm. It carries out the reaction phosphoenolpyruvate + UDP-N-acetyl-alpha-D-glucosamine = UDP-N-acetyl-3-O-(1-carboxyvinyl)-alpha-D-glucosamine + phosphate. The protein operates within cell wall biogenesis; peptidoglycan biosynthesis. Cell wall formation. Adds enolpyruvyl to UDP-N-acetylglucosamine. The sequence is that of UDP-N-acetylglucosamine 1-carboxyvinyltransferase from Corynebacterium jeikeium (strain K411).